A 254-amino-acid polypeptide reads, in one-letter code: Tryptophan synthase alpha chain (254 aa).

Residues Glu-48 and Asp-59 each act as proton acceptor in the active site.

This sequence belongs to the TrpA family. Tetramer of two alpha and two beta chains.

The enzyme catalyses (1S,2R)-1-C-(indol-3-yl)glycerol 3-phosphate + L-serine = D-glyceraldehyde 3-phosphate + L-tryptophan + H2O. Its pathway is amino-acid biosynthesis; L-tryptophan biosynthesis; L-tryptophan from chorismate: step 5/5. In terms of biological role, the alpha subunit is responsible for the aldol cleavage of indoleglycerol phosphate to indole and glyceraldehyde 3-phosphate. In Desulfotalea psychrophila (strain LSv54 / DSM 12343), this protein is Tryptophan synthase alpha chain.